Reading from the N-terminus, the 1522-residue chain is Myosin-15 (1522 aa).

The region spanning arginine 12 to proline 61 is the Myosin N-terminal SH3-like domain. A Myosin motor domain is found at asparagine 67–alanine 737. Residues glycine 161–threonine 168 and asparagine 214–lysine 222 each bind ATP. Actin-binding stretches follow at residues leucine 499–phenylalanine 533, phenylalanine 535–valine 558, phenylalanine 593–leucine 618, and leucine 618–serine 640. 5 consecutive IQ domains span residues alanine 763 to alanine 792, asparagine 788 to valine 817, leucine 811 to alanine 840, glutamate 836 to alanine 865, and arginine 859 to glutamate 888. Positions alanine 889–isoleucine 1059 form a coiled coil. One can recognise a Dilute domain in the interval asparagine 1164–lysine 1456.

It belongs to the TRAFAC class myosin-kinesin ATPase superfamily. Myosin family. Plant myosin class XI subfamily. As to quaternary structure, homodimer. Interacts with MYOB1 and MYOB7. Interacts with WIT1 and WIT2. Core component of the LINC complex which is composed of inner nuclear membrane SUN domain-containing proteins coupled to outer nuclear membrane WIP and WIT proteins. The LINC complex also involves nucleoskeletal proteins CRWN/LINC and possibly KAKU4 and the cytoskeletal myosin KAKU1.

It is found in the cytoplasm. Its subcellular location is the nucleus membrane. Its function is as follows. Myosin heavy chain that is required for the cell cycle-regulated transport of various organelles and proteins for their segregation. Functions by binding with its tail domain to receptor proteins on organelles and exerting force with its N-terminal motor domain against actin filaments, thereby transporting its cargo along polarized actin cables. Involved in trafficking of Golgi stacks and mitochondria. Plays a role in nuclear shape determination. Drives nuclear movement along actin filaments. As component of the SUN-WIP-WIT2-KAKU1 complex, mediates the transfer of cytoplasmic forces to the nuclear envelope (NE), leading to nuclear shape changes. The chain is Myosin-15 (XI-I) from Arabidopsis thaliana (Mouse-ear cress).